We begin with the raw amino-acid sequence, 229 residues long: 2-C-methyl-D-erythritol 4-phosphate cytidylyltransferase (229 aa).

It belongs to the IspD/TarI cytidylyltransferase family. IspD subfamily.

It carries out the reaction 2-C-methyl-D-erythritol 4-phosphate + CTP + H(+) = 4-CDP-2-C-methyl-D-erythritol + diphosphate. The protein operates within isoprenoid biosynthesis; isopentenyl diphosphate biosynthesis via DXP pathway; isopentenyl diphosphate from 1-deoxy-D-xylulose 5-phosphate: step 2/6. In terms of biological role, catalyzes the formation of 4-diphosphocytidyl-2-C-methyl-D-erythritol from CTP and 2-C-methyl-D-erythritol 4-phosphate (MEP). The chain is 2-C-methyl-D-erythritol 4-phosphate cytidylyltransferase from Neisseria gonorrhoeae (strain ATCC 700825 / FA 1090).